Here is an 842-residue protein sequence, read N- to C-terminus: Glycogen phosphorylase, muscle form (842 aa).

Residue Ser2 is modified to N-acetylserine. The residue at position 15 (Ser15) is a Phosphoserine; by PHK; in form phosphorylase A. Residues Asp43 and Tyr76 each coordinate AMP. Phosphotyrosine occurs at positions 204 and 227. AMP is bound at residue 310–319 (RRFKSSKFGC). At Ser430 the chain carries Phosphoserine. Tyr473 carries the phosphotyrosine modification. Lys681 carries the N6-(pyridoxal phosphate)lysine modification. Phosphoserine occurs at positions 747 and 748.

The protein belongs to the glycogen phosphorylase family. In terms of assembly, homodimer. Homotetramer; to form the enzymatically active phosphorylase A. It depends on pyridoxal 5'-phosphate as a cofactor. In terms of processing, phosphorylation of Ser-15 converts phosphorylase B (unphosphorylated) to phosphorylase A.

It catalyses the reaction [(1-&gt;4)-alpha-D-glucosyl](n) + phosphate = [(1-&gt;4)-alpha-D-glucosyl](n-1) + alpha-D-glucose 1-phosphate. Allosterically regulated through the non-covalent binding of metabolites, being activated by AMP and inhibited by ATP, ADP, and glucose-6-phosphate. The activity is also controlled by post-translational modifications including phosphorylation. Functionally, allosteric enzyme that catalyzes the rate-limiting step in glycogen catabolism, the phosphorolytic cleavage of glycogen to produce glucose-1-phosphate, and plays a central role in maintaining cellular and organismal glucose homeostasis. The polypeptide is Glycogen phosphorylase, muscle form (Ovis aries (Sheep)).